Consider the following 337-residue polypeptide: Primase homolog protein (337 aa).

Residues 205 to 304 (SEIIIVEGEP…WLVKWPKKSE (100 aa)) form the Toprim domain. Residues E211, D273, and D275 each contribute to the Mg(2+) site.

The cofactor is Mg(2+).

In terms of biological role, may act as a DNA primase. This chain is Primase homolog protein, found in Arabidopsis thaliana (Mouse-ear cress).